A 296-amino-acid chain; its full sequence is MINAKQVPTADMSCQLLYISESQACQVYSLQALIAEHELSIILNVERYVDKLNQKRRQQLSQESTQPVLLLDDKNKLSWLSDGLSIAPEWDKLQRRVVSAGRKSELLLQATKMTADSKVIDATAGFGHDSLILASTGAQVTMLEQHPLMALLLLAEQQRMSTLPNWQKLMSRLHIINTDALSYFARFNNYLEADNEQAVDVVYLDPMFPEDSYQDSKTGKGAKVGKHMQALHQLVCPPTLDEEQKLLQSAQTFVSQQAQKQGRVIVKRPQFAPLLAHLEPSESWSNEAVRFDGYFV.

An S-adenosyl-L-methionine-binding site is contributed by Asp-205.

It belongs to the methyltransferase superfamily. RsmJ family.

It is found in the cytoplasm. It catalyses the reaction guanosine(1516) in 16S rRNA + S-adenosyl-L-methionine = N(2)-methylguanosine(1516) in 16S rRNA + S-adenosyl-L-homocysteine + H(+). Its function is as follows. Specifically methylates the guanosine in position 1516 of 16S rRNA. This is Ribosomal RNA small subunit methyltransferase J from Psychrobacter arcticus (strain DSM 17307 / VKM B-2377 / 273-4).